We begin with the raw amino-acid sequence, 425 residues long: Glutamyl-tRNA reductase (425 aa).

Residues 49 to 52, Ser106, 111 to 113, and Gln117 each bind substrate; these read TCNR and EPQ. Catalysis depends on Cys50, which acts as the Nucleophile. Residue 186–191 participates in NADP(+) binding; the sequence is GAGETI.

The protein belongs to the glutamyl-tRNA reductase family. In terms of assembly, homodimer.

The catalysed reaction is (S)-4-amino-5-oxopentanoate + tRNA(Glu) + NADP(+) = L-glutamyl-tRNA(Glu) + NADPH + H(+). It participates in porphyrin-containing compound metabolism; protoporphyrin-IX biosynthesis; 5-aminolevulinate from L-glutamyl-tRNA(Glu): step 1/2. In terms of biological role, catalyzes the NADPH-dependent reduction of glutamyl-tRNA(Glu) to glutamate 1-semialdehyde (GSA). This chain is Glutamyl-tRNA reductase, found in Saccharophagus degradans (strain 2-40 / ATCC 43961 / DSM 17024).